Reading from the N-terminus, the 1223-residue chain is A disintegrin and metalloproteinase with thrombospondin motifs 14 (1223 aa).

An N-terminal signal peptide occupies residues 1-22 (MAPLRALLSYLLPLHCALCAAA). A propeptide spanning residues 23 to 252 (GSRTPELHLS…QLGDTERKRR (230 aa)) is cleaved from the precursor. The N-linked (GlcNAc...) asparagine glycan is linked to asparagine 109. Positions 259 to 460 (YSIEVLLVVD…PSYDCLLDDP (202 aa)) constitute a Peptidase M12B domain. 3 disulfide bridges follow: cysteine 336–cysteine 382, cysteine 376–cysteine 455, and cysteine 415–cysteine 441. Histidine 398 provides a ligand contact to Zn(2+). Glutamate 399 is a catalytic residue. Histidine 402 and histidine 408 together coordinate Zn(2+). Residues 461-551 (FDPAWPQPPE…WKSPEQTYGQ (91 aa)) enclose the Disintegrin domain. Asparagine 475 carries an N-linked (GlcNAc...) asparagine glycan. Disulfide bonds link cysteine 482-cysteine 507, cysteine 493-cysteine 516, cysteine 502-cysteine 535, cysteine 529-cysteine 540, cysteine 564-cysteine 601, cysteine 568-cysteine 606, and cysteine 579-cysteine 591. The TSP type-1 1 domain maps to 552-607 (DGGWSSWTKFGSCSRSCGGGVRSRSRSCNNPSPAYGGRLCLGPMFEYQVCNSEECP). The spacer stretch occupies residues 730 to 846 (LKLVQIPAGA…GSNNVLLEEM (117 aa)). 3 consecutive TSP type-1 domains span residues 847-907 (DTYE…HPCS), 908-967 (QPVW…LRVP), and 968-1022 (CPAQ…PACG). Residue asparagine 941 is glycosylated (N-linked (GlcNAc...) asparagine). Cystine bridges form between cysteine 980–cysteine 1016, cysteine 984–cysteine 1021, and cysteine 995–cysteine 1005. N-linked (GlcNAc...) asparagine glycosylation is present at asparagine 1027. The PLAC domain maps to 1059-1097 (STEPCTGDRSVFCQMEVLDRYCSIPGYHRLCCVSCIKKA). The disordered stretch occupies residues 1100-1223 (PNPGPDPGPT…TSLPAASPVT (124 aa)). Residues 1101 to 1125 (NPGPDPGPTSLPPFSTPGSPLPGPQ) show a composition bias toward pro residues. Residues 1199-1211 (PEDKGQPGEDLRH) are compositionally biased toward basic and acidic residues.

In terms of processing, the precursor is cleaved by a furin endopeptidase. Post-translationally, glycosylated. Can be O-fucosylated by POFUT2 on a serine or a threonine residue found within the consensus sequence C1-X(2)-(S/T)-C2-G of the TSP type-1 repeat domains where C1 and C2 are the first and second cysteine residue of the repeat, respectively. Fucosylated repeats can then be further glycosylated by the addition of a beta-1,3-glucose residue by the glucosyltransferase, B3GALTL. Fucosylation mediates the efficient secretion of ADAMTS family members. Can also be C-glycosylated with one or two mannose molecules on tryptophan residues within the consensus sequence W-X-X-W of the TPRs, and N-glycosylated. These other glycosylations can also facilitate secretion. Expressed in retina and at low levels in brain, lung and placenta. High expression in fetal tissues.

It is found in the secreted. Its subcellular location is the extracellular space. The protein resides in the extracellular matrix. Has aminoprocollagen type I processing activity in the absence of ADAMTS2. Seems to be synthesized as a latent enzyme that requires activation to display aminoprocollagen peptidase activity. Cleaves lysyl oxidase LOX at a site downstream of its propeptide cleavage site to produce a short LOX form. The protein is A disintegrin and metalloproteinase with thrombospondin motifs 14 (ADAMTS14) of Homo sapiens (Human).